A 331-amino-acid polypeptide reads, in one-letter code: Phenylalanine--tRNA ligase alpha subunit (331 aa).

Glu-252 contributes to the Mg(2+) binding site.

The protein belongs to the class-II aminoacyl-tRNA synthetase family. Phe-tRNA synthetase alpha subunit type 1 subfamily. As to quaternary structure, tetramer of two alpha and two beta subunits. The cofactor is Mg(2+).

The protein resides in the cytoplasm. It carries out the reaction tRNA(Phe) + L-phenylalanine + ATP = L-phenylalanyl-tRNA(Phe) + AMP + diphosphate + H(+). In Marinomonas sp. (strain MWYL1), this protein is Phenylalanine--tRNA ligase alpha subunit.